We begin with the raw amino-acid sequence, 198 residues long: ATP-dependent Clp protease proteolytic subunit (198 aa).

Residue Ser98 is the Nucleophile of the active site. Residue His123 is part of the active site.

This sequence belongs to the peptidase S14 family. In terms of assembly, fourteen ClpP subunits assemble into 2 heptameric rings which stack back to back to give a disk-like structure with a central cavity, resembling the structure of eukaryotic proteasomes.

It is found in the cytoplasm. It catalyses the reaction Hydrolysis of proteins to small peptides in the presence of ATP and magnesium. alpha-casein is the usual test substrate. In the absence of ATP, only oligopeptides shorter than five residues are hydrolyzed (such as succinyl-Leu-Tyr-|-NHMec, and Leu-Tyr-Leu-|-Tyr-Trp, in which cleavage of the -Tyr-|-Leu- and -Tyr-|-Trp bonds also occurs).. Cleaves peptides in various proteins in a process that requires ATP hydrolysis. Has a chymotrypsin-like activity. Plays a major role in the degradation of misfolded proteins. This Listeria monocytogenes serovar 1/2a (strain ATCC BAA-679 / EGD-e) protein is ATP-dependent Clp protease proteolytic subunit.